The chain runs to 363 residues: MPSWWCCCCLVVLLYAQRMIVPSSAQNDGSDELQECPGGFCSPKYLCPNGTYNEANAQNQEIIMLRFGEEDVCQDYMQVCCSNATSMRYELVTNNEPVEYGCGISNPGGLIYQVEGNRTYAQYGEFPWVVAILEAFYSSNEQQFTYVGGGTLIHPRFVVTAAHIFNKTENLVASFGEWDMNRDENVYPKQNIDIDRTIIVHPEYNSVGLLNDIALAQLKQNVVYDKHIRPICLPNPTDRFDDQLCISTGWGIEALTSAYANVLKRVDLPVIARASCKKLFAETRLGPFFRLHKSVLCAGGEEGADMCDGDGGSGLACPNESGAYVLAGIVSWGLSCHQQNVPGAYVNVARFVTWINATIEGIL.

Residues 1–25 (MPSWWCCCCLVVLLYAQRMIVPSSA) form the signal peptide. The 50-residue stretch at 33–82 (LQECPGGFCSPKYLCPNGTYNEANAQNQEIIMLRFGEEDVCQDYMQVCCS) folds into the Clip domain. 3 disulfide bridges follow: Cys36/Cys80, Cys41/Cys73, and Cys47/Cys81. 4 N-linked (GlcNAc...) asparagine glycosylation sites follow: Asn49, Asn83, Asn117, and Asn166. Residues 114–360 (VEGNRTYAQY…FVTWINATIE (247 aa)) form the Peptidase S1 domain. 3 disulfide bridges follow: Cys245-Cys317, Cys276-Cys297, and Cys307-Cys336. Asn319 and Asn356 each carry an N-linked (GlcNAc...) asparagine glycan.

The protein belongs to the peptidase S1 family. CLIP subfamily. Heterodimer of a light chain and a heavy chain; disulfide-linked. Post-translationally, secreted as a full-length protein. Proteolytically cleaved into two chains which remain covalently linked. Cleavage is induced by Gram-positive or Gram-negative bacteria infection.

Its subcellular location is the secreted. In terms of biological role, inactive serine protease which plays an essential role in the innate immune response against bacteria, fungi and protozoa infection by activating the melanization cascade. In the melanization cascade, acts downstream of TEP1 and SPCLIP1 to promote CLIPA28 and CLIPC9 proteolytic cleavage and CLIPC9 recruitment to microbial surfaces. In the resistant strain L3-5, required for the melanization of killed parasite P.berghei ookinetes which results in their clearance. In the susceptible strain G3, appears to be dispensable for ookinete elimination which occurs by lysis. Required for the melanization of Gram-positive and Gram-negative bacteria. During the late stage of fungus B.bassiana-mediated infection, required for the initiation of hyphae melanization by promoting prophenoloxidase PPO activation. The protein is Inactive CLIP domain-containing serine protease A8 of Anopheles gambiae (African malaria mosquito).